The primary structure comprises 2267 residues: Acetyl-CoA carboxylase 1 (2267 aa).

Residues 38–544 (PIHSVLVANN…HTGWLDSRIA (507 aa)) enclose the Biotin carboxylation domain. In terms of domain architecture, ATP-grasp spans 190–384 (PESCNSIPEE…AAQVVVGMGV (195 aa)). Residue 216–273 (CQVVGYPAMIKASWGGGGKGIRKVHNDDEVRALFKQVQGEVPGSPIFIMKVASQSRHL) participates in ATP binding. The Mg(2+) site is built by E339, E353, and N355. Positions 339, 353, and 355 each coordinate Mn(2+). R357 is a catalytic residue. Positions 671–745 (LQKEHDPSKL…QAADLIARLD (75 aa)) constitute a Biotinyl-binding domain. K712 bears the N6-biotinyllysine mark. Positions 1502-1843 (PYKPLDAIDL…YVGGPLPIMK (342 aa)) constitute a CoA carboxyltransferase N-terminal domain. The interval 1502–2163 (PYKPLDAIDL…EDALAKEIRE (662 aa)) is carboxyltransferase. CoA-binding residues include R1752, K2053, and R2055. In terms of domain architecture, CoA carboxyltransferase C-terminal spans 1847-2163 (PPDRPVTYFP…EDALAKEIRE (317 aa)).

Homodimer. The cofactor is Mg(2+). Mn(2+) is required as a cofactor. It depends on biotin as a cofactor.

It localises to the cytoplasm. The protein localises to the cytosol. It catalyses the reaction hydrogencarbonate + acetyl-CoA + ATP = malonyl-CoA + ADP + phosphate + H(+). It carries out the reaction N(6)-biotinyl-L-lysyl-[protein] + hydrogencarbonate + ATP = N(6)-carboxybiotinyl-L-lysyl-[protein] + ADP + phosphate + H(+). The protein operates within lipid metabolism; malonyl-CoA biosynthesis; malonyl-CoA from acetyl-CoA: step 1/1. Multifunctional enzyme that catalyzes the carboxylation of acetyl-CoA, forming malonyl-CoA, which is used in the plastid for fatty acid synthesis and in the cytosol in various biosynthetic pathways including fatty acid elongation. This chain is Acetyl-CoA carboxylase 1 (ACC1), found in Oryza sativa subsp. japonica (Rice).